Consider the following 205-residue polypeptide: Holliday junction branch migration complex subunit RuvA (205 aa).

Positions 1–64 are domain I; the sequence is MIGKLKGTID…EDQLKLFGFL (64 aa). Residues 65 to 143 form a domain II region; sequence SALEREWFRL…AFVGEMAPSI (79 aa). Residues 144 to 153 are flexible linker; the sequence is GLKQELGEGV. The interval 153–205 is domain III; the sequence is VAAAPVSDAVSALTNLGYSRDQAANAVAAALKNGGEGADSARLIRLGLKELSR.

The protein belongs to the RuvA family. As to quaternary structure, homotetramer. Forms an RuvA(8)-RuvB(12)-Holliday junction (HJ) complex. HJ DNA is sandwiched between 2 RuvA tetramers; dsDNA enters through RuvA and exits via RuvB. An RuvB hexamer assembles on each DNA strand where it exits the tetramer. Each RuvB hexamer is contacted by two RuvA subunits (via domain III) on 2 adjacent RuvB subunits; this complex drives branch migration. In the full resolvosome a probable DNA-RuvA(4)-RuvB(12)-RuvC(2) complex forms which resolves the HJ.

It is found in the cytoplasm. Functionally, the RuvA-RuvB-RuvC complex processes Holliday junction (HJ) DNA during genetic recombination and DNA repair, while the RuvA-RuvB complex plays an important role in the rescue of blocked DNA replication forks via replication fork reversal (RFR). RuvA specifically binds to HJ cruciform DNA, conferring on it an open structure. The RuvB hexamer acts as an ATP-dependent pump, pulling dsDNA into and through the RuvAB complex. HJ branch migration allows RuvC to scan DNA until it finds its consensus sequence, where it cleaves and resolves the cruciform DNA. This chain is Holliday junction branch migration complex subunit RuvA, found in Sinorhizobium medicae (strain WSM419) (Ensifer medicae).